A 265-amino-acid polypeptide reads, in one-letter code: Triosephosphate isomerase (265 aa).

8–10 (NWK) serves as a coordination point for substrate. H103 serves as the catalytic Electrophile. E182 (proton acceptor) is an active-site residue. Substrate is bound by residues G188, S226, and 247–248 (GG).

The protein belongs to the triosephosphate isomerase family. Homodimer.

Its subcellular location is the cytoplasm. It carries out the reaction D-glyceraldehyde 3-phosphate = dihydroxyacetone phosphate. The protein operates within carbohydrate biosynthesis; gluconeogenesis. It functions in the pathway carbohydrate degradation; glycolysis; D-glyceraldehyde 3-phosphate from glycerone phosphate: step 1/1. Its function is as follows. Involved in the gluconeogenesis. Catalyzes stereospecifically the conversion of dihydroxyacetone phosphate (DHAP) to D-glyceraldehyde-3-phosphate (G3P). This Psychrobacter sp. (strain PRwf-1) protein is Triosephosphate isomerase.